The following is a 494-amino-acid chain: UPF0371 protein SP70585_0405 (494 aa).

It belongs to the UPF0371 family.

This is UPF0371 protein SP70585_0405 from Streptococcus pneumoniae (strain 70585).